The primary structure comprises 296 residues: Cadherin-4 (296 aa).

Cadherin domains lie at 1 to 101 (NVPE…RPEF), 102 to 216 (INQV…PPEF), and 217 to 296 (TTST…MLTI). Over 1 to 296 (NVPENSRGPF…ELNRAFMLTI (296 aa)) the chain is Extracellular. Residues Asn-107 and Asn-236 are each glycosylated (N-linked (GlcNAc...) asparagine).

The protein localises to the cell membrane. In terms of biological role, cadherins are calcium-dependent cell adhesion proteins. They preferentially interact with themselves in a homophilic manner in connecting cells; cadherins may thus contribute to the sorting of heterogeneous cell types. May play an important role in retinal development. The polypeptide is Cadherin-4 (Cdh4) (Rattus norvegicus (Rat)).